The following is a 335-amino-acid chain: Phospholipid scramblase 1 (335 aa).

The proline-rich domain (PRD) stretch occupies residues 1 to 101 (MEKHGPPEHA…NHPGGPGGTP (101 aa)). Residues 1-102 (MEKHGPPEHA…HPGGPGGTPW (102 aa)) are disordered. The Cytoplasmic segment spans residues 1–305 (MEKHGPPEHA…IQFPLDLDVK (305 aa)). 6 repeat units span residues 23–29 (QGPYPGP), 30–36 (QGPYPGP), 37–43 (QGPYAGP), 44–50 (QGPYPGP), 51–57 (QGPYAGP), and 58–64 (QGPYPGP). The segment at 23–71 (QGPYPGPQGPYPGPQGPYAGPQGPYPGPQGPYAGPQGPYPGPQPGYPVP) is 7 X 7 AA tandem repeats of Q-G-P-Y-[AP]-G-P. The segment covering 26–37 (YPGPQGPYPGPQ) has biased composition (pro residues). The segment covering 59–72 (GPYPGPQPGYPVPP) has biased composition (pro residues). The SH3-binding 1 signature appears at 64–72 (PQPGYPVPP). One copy of the 7; approximate repeat lies at 65-71 (QPGYPVP). Position 91 is a phosphotyrosine; by ABL (tyrosine 91). Residues 101-109 (PWMQAPPPP) carry the SH3-binding 2 motif. Threonine 178 is subject to Phosphothreonine; by PKC/PRKCD. 4 S-palmitoyl cysteine lipidation sites follow: cysteine 201, cysteine 202, cysteine 205, and cysteine 206. A Nuclear localization signal motif is present at residues 274 to 283 (GKISKQWSGF). A helical membrane pass occupies residues 306–322 (MKAVMLGACFLIDFMFF). At 323–335 (ERTGNEEQRSGVW) the chain is on the extracellular side.

The protein belongs to the phospholipid scramblase family. In terms of assembly, forms homooligomers in the presence of calcium. Interacts with ABL. Interacts with RELT, RELL1 and RELL2. Interacts with OXSR1 in the presence of RELT. Interacts with OCLN, TOP2A and TOP2B. Interacts with TRPC1, TRPC4 and TRPC5. Interacts with ILDR1. Ca(2+) serves as cofactor. Mg(2+) is required as a cofactor. The cofactor is Zn(2+). In terms of processing, phosphorylated on tyrosine residues. Phosphorylated by OXSR1 in the presence of RELT. Phosphorylation at Thr-178 by PKC/PKCD increases its phospholipid scramblase activity during both cell stimulation and apoptosis. Post-translationally, palmitoylation is required for its phospholipid scramblase activity. Palmitoylation regulates its localization to the cell membrane or the nucleus; trafficking to the cell membrane is dependent upon palmitoylation whereas in the absence of palmitoylation, localizes to the nucleus.

It localises to the cell membrane. It is found in the nucleus. The protein localises to the cytoplasm. Its subcellular location is the perinuclear region. The catalysed reaction is a 1,2-diacyl-sn-glycero-3-phosphocholine(in) = a 1,2-diacyl-sn-glycero-3-phosphocholine(out). It catalyses the reaction a 1,2-diacyl-sn-glycero-3-phosphoethanolamine(in) = a 1,2-diacyl-sn-glycero-3-phosphoethanolamine(out). The enzyme catalyses a 1,2-diacyl-sn-glycero-3-phospho-L-serine(in) = a 1,2-diacyl-sn-glycero-3-phospho-L-serine(out). In terms of biological role, catalyzes calcium-induced ATP-independent rapid bidirectional and non-specific distribution of phospholipids (lipid scrambling or lipid flip-flop) between the inner and outer leaflet of the plasma membrane resulting in collapse of the phospholipid asymmetry which leads to phosphatidylserine externalization on the cell surface. Mediates calcium-dependent phosphatidylserine externalization and apoptosis in neurons via its association with TRPC5. Also exhibits magnesium-dependent nuclease activity against double-stranded DNA and RNA but not single-stranded DNA and can enhance DNA decatenation mediated by TOP2A. Negatively regulates FcR-mediated phagocytosis in differentiated macrophages. May contribute to cytokine-regulated cell proliferation and differentiation. This Rattus norvegicus (Rat) protein is Phospholipid scramblase 1 (Plscr1).